Reading from the N-terminus, the 355-residue chain is MAEFVRAQIFGTTFEITSRYTDLQPVGMGAFGLVCSAKDQLTSQAVAIKKIMKPFSTPVLSKRTYRELKLLKHLRHENIISLSDIFISPLEDIYFVTELLGTDLHRLLTSRPLEKQFIQYFLYQILRGLKYVHSAGVVHRDLKPSNILVNENCDLKICDFGLARIQDPQMTGYVSTRYYRAPEIMLTWQKYDVEVDIWSAGCIFAEMLEGKPLFPGKDHVNQFSIITELLGTPPDDVIQTICSENTLRFVQSLPKRERQPLSNKFKNAEPQAVDLLENMLVFDPKKRVRAEQALAHPYLAPYHDPTDEPIAEEKFDWSFNDADLPVDTWKIMMYSEILDYHNVDAAAQEQENNGS.

The region spanning 20–299 is the Protein kinase domain; that stretch reads YTDLQPVGMG…AEQALAHPYL (280 aa). ATP-binding positions include 26–34 and lysine 49; that span reads VGMGAFGLV. Residue aspartate 141 is the Proton acceptor of the active site. Threonine 171 bears the Phosphothreonine mark. Positions 171–173 match the TXY motif; that stretch reads TGY. A Phosphotyrosine modification is found at tyrosine 173.

The protein belongs to the protein kinase superfamily. Ser/Thr protein kinase family. MAP kinase subfamily. HOG1 sub-subfamily. The cofactor is Mg(2+). Post-translationally, dually phosphorylated on Thr-171 and Tyr-173, which activates the enzyme.

Its subcellular location is the cytoplasm. It localises to the nucleus. It catalyses the reaction L-seryl-[protein] + ATP = O-phospho-L-seryl-[protein] + ADP + H(+). It carries out the reaction L-threonyl-[protein] + ATP = O-phospho-L-threonyl-[protein] + ADP + H(+). Activated by tyrosine and threonine phosphorylation. In terms of biological role, proline-directed serine/threonine-protein kinase involved in a signal transduction pathway that is activated by changes in the osmolarity of the extracellular environment. Controls osmotic regulation of transcription of target genes. The sequence is that of Mitogen-activated protein kinase HOG1 (HOG1) from Alternaria brassicicola (Dark leaf spot agent).